The following is a 175-amino-acid chain: MNPYILTPDLNGEGLHIGIVRARFNEEIGQAQLQACLEELGKLGVDERDVMVVSVPGALELGVALARMAESYEFDALIALGAVIRGETYHFEVVSNESAAAISRIALETGIPVANGVLTVDTDEQAQARAAGKGADCAQVAVEMANLAAALEPEEDDEDEDDEDEDFDDEEDDGR.

5-amino-6-(D-ribitylamino)uracil-binding positions include Phe24, Ala58–Glu60, and Ala82–Ile84. Glu87–Thr88 is a binding site for (2S)-2-hydroxy-3-oxobutyl phosphate. Residue His90 is the Proton donor of the active site. Asn115 is a binding site for 5-amino-6-(D-ribitylamino)uracil. Arg129 is a binding site for (2S)-2-hydroxy-3-oxobutyl phosphate. The disordered stretch occupies residues Ala150–Arg175. The span at Glu152–Arg175 shows a compositional bias: acidic residues.

Belongs to the DMRL synthase family.

It carries out the reaction (2S)-2-hydroxy-3-oxobutyl phosphate + 5-amino-6-(D-ribitylamino)uracil = 6,7-dimethyl-8-(1-D-ribityl)lumazine + phosphate + 2 H2O + H(+). Its pathway is cofactor biosynthesis; riboflavin biosynthesis; riboflavin from 2-hydroxy-3-oxobutyl phosphate and 5-amino-6-(D-ribitylamino)uracil: step 1/2. In terms of biological role, catalyzes the formation of 6,7-dimethyl-8-ribityllumazine by condensation of 5-amino-6-(D-ribitylamino)uracil with 3,4-dihydroxy-2-butanone 4-phosphate. This is the penultimate step in the biosynthesis of riboflavin. The protein is 6,7-dimethyl-8-ribityllumazine synthase of Bordetella bronchiseptica (strain ATCC BAA-588 / NCTC 13252 / RB50) (Alcaligenes bronchisepticus).